A 350-amino-acid polypeptide reads, in one-letter code: Heat-inducible transcription repressor HrcA (350 aa).

The protein belongs to the HrcA family.

In terms of biological role, negative regulator of class I heat shock genes (grpE-dnaK-dnaJ and groELS operons). Prevents heat-shock induction of these operons. The protein is Heat-inducible transcription repressor HrcA of Limosilactobacillus reuteri (strain DSM 20016) (Lactobacillus reuteri).